A 453-amino-acid chain; its full sequence is Bifunctional protein GlmU (453 aa).

Residues 1-228 (MPHWAAVIMA…VHEALGINSR (228 aa)) form a pyrophosphorylase region. Residues Lys23, Gln73, 78-79 (GT), 100-102 (SGD), Gly139, Glu153, Asn168, and Asn226 each bind UDP-N-acetyl-alpha-D-glucosamine. Asp102 lines the Mg(2+) pocket. Asn226 contributes to the Mg(2+) binding site. The tract at residues 229-249 (AQLAAAEDVARQRILSYWMEE) is linker. An N-acetyltransferase region spans residues 250–453 (GVTIIDPRST…IENWVRNKKK (204 aa)). Residues Arg331 and Lys349 each coordinate UDP-N-acetyl-alpha-D-glucosamine. The active-site Proton acceptor is the His361. Tyr364 and Asn375 together coordinate UDP-N-acetyl-alpha-D-glucosamine. Residues Ala378, 384 to 385 (NY), Ser403, Ala421, and Arg438 each bind acetyl-CoA.

It in the N-terminal section; belongs to the N-acetylglucosamine-1-phosphate uridyltransferase family. The protein in the C-terminal section; belongs to the transferase hexapeptide repeat family. In terms of assembly, homotrimer. It depends on Mg(2+) as a cofactor.

The protein resides in the cytoplasm. The enzyme catalyses alpha-D-glucosamine 1-phosphate + acetyl-CoA = N-acetyl-alpha-D-glucosamine 1-phosphate + CoA + H(+). It carries out the reaction N-acetyl-alpha-D-glucosamine 1-phosphate + UTP + H(+) = UDP-N-acetyl-alpha-D-glucosamine + diphosphate. It participates in nucleotide-sugar biosynthesis; UDP-N-acetyl-alpha-D-glucosamine biosynthesis; N-acetyl-alpha-D-glucosamine 1-phosphate from alpha-D-glucosamine 6-phosphate (route II): step 2/2. The protein operates within nucleotide-sugar biosynthesis; UDP-N-acetyl-alpha-D-glucosamine biosynthesis; UDP-N-acetyl-alpha-D-glucosamine from N-acetyl-alpha-D-glucosamine 1-phosphate: step 1/1. It functions in the pathway bacterial outer membrane biogenesis; LPS lipid A biosynthesis. In terms of biological role, catalyzes the last two sequential reactions in the de novo biosynthetic pathway for UDP-N-acetylglucosamine (UDP-GlcNAc). The C-terminal domain catalyzes the transfer of acetyl group from acetyl coenzyme A to glucosamine-1-phosphate (GlcN-1-P) to produce N-acetylglucosamine-1-phosphate (GlcNAc-1-P), which is converted into UDP-GlcNAc by the transfer of uridine 5-monophosphate (from uridine 5-triphosphate), a reaction catalyzed by the N-terminal domain. This chain is Bifunctional protein GlmU, found in Desulfitobacterium hafniense (strain DSM 10664 / DCB-2).